Consider the following 408-residue polypeptide: NADH-quinone oxidoreductase subunit D (408 aa).

This sequence belongs to the complex I 49 kDa subunit family. As to quaternary structure, NDH-1 is composed of 14 different subunits. Subunits NuoB, C, D, E, F, and G constitute the peripheral sector of the complex.

Its subcellular location is the cell inner membrane. The enzyme catalyses a quinone + NADH + 5 H(+)(in) = a quinol + NAD(+) + 4 H(+)(out). NDH-1 shuttles electrons from NADH, via FMN and iron-sulfur (Fe-S) centers, to quinones in the respiratory chain. The immediate electron acceptor for the enzyme in this species is believed to be ubiquinone. Couples the redox reaction to proton translocation (for every two electrons transferred, four hydrogen ions are translocated across the cytoplasmic membrane), and thus conserves the redox energy in a proton gradient. This is NADH-quinone oxidoreductase subunit D from Campylobacter jejuni subsp. jejuni serotype O:2 (strain ATCC 700819 / NCTC 11168).